Consider the following 209-residue polypeptide: MNANTVLPPGLLLVLSAPSGAGKTTLAHRLLKETPDAVFSISVTTRRPRGKEREGVDYNFVDVATFQSKIERGEFVEWAEVYGHFYGSPQSVVDEARARKSAAIFDIDVQGGQAIKRKHPDAVTIFVLPPSMEELERRLRDRQTDSDETIRRRMLAARSEIERGIASYDYVVVNDDFERAFSDLRSVVVAERCRRERVDVSKLGLGIGG.

A Guanylate kinase-like domain is found at 10 to 189; the sequence is GLLLVLSAPS…AFSDLRSVVV (180 aa). 17 to 24 is an ATP binding site; the sequence is APSGAGKT.

Belongs to the guanylate kinase family.

The protein localises to the cytoplasm. The catalysed reaction is GMP + ATP = GDP + ADP. Essential for recycling GMP and indirectly, cGMP. The protein is Guanylate kinase of Myxococcus xanthus (strain DK1622).